Consider the following 333-residue polypeptide: Taste receptor type 2 member 38 (333 aa).

Residues 1–17 (MLTLTRIRTVSYEVRST) lie on the Extracellular side of the membrane. Residues 18-38 (FLFISVLEFAVGFLTNAFVFL) traverse the membrane as a helical segment. The Cytoplasmic portion of the chain corresponds to 39 to 55 (VNFWDVVKRQPLSNSDC). A helical membrane pass occupies residues 56-76 (VLLCLSISRLFLHGLLFLSAI). Residues 77–94 (QLTHFQKLSEPLNHSYQA) are Extracellular-facing. A helical transmembrane segment spans residues 95–115 (IIMLWMIANQANLWLAACLSL). At 116-142 (LYCSKLIRFSHTFLICLASWVSRKISQ) the chain is on the cytoplasmic side. The helical transmembrane segment at 143–163 (MLLGIILCSCICTVLCVWCFF) threads the bilayer. The Extracellular segment spans residues 164 to 190 (SRPHFTVTTVLFMNNNTRLNWQIKDLN). Residue Asn178 is glycosylated (N-linked (GlcNAc...) asparagine). The helical transmembrane segment at 191–211 (LFYSFLFCYLWSVPPFLLFLV) threads the bilayer. The Cytoplasmic portion of the chain corresponds to 212-251 (SSGMLTVSLGRHMRTMKVYIRDSRDPSLEAHIKALKSLVS). A helical transmembrane segment spans residues 252-272 (FFCFFVISSCAAFISVPLLIL). Residues 273–276 (WRDK) are Extracellular-facing. Residues 277 to 297 (IGVMVCVGIMAACPSGHAAVL) form a helical membrane-spanning segment. At 298–333 (ISGNAKLRRAVTTILLWAQSSLKVRADHKADSRTPC) the chain is on the cytoplasmic side.

This sequence belongs to the G-protein coupled receptor T2R family.

It localises to the membrane. Its function is as follows. Receptor that may play a role in the perception of bitterness and is gustducin-linked. May play a role in sensing the chemical composition of the gastrointestinal content. The activity of this receptor may stimulate alpha gustducin, mediate PLC-beta-2 activation and lead to the gating of TRPM5. The polypeptide is Taste receptor type 2 member 38 (TAS2R38) (Gorilla gorilla gorilla (Western lowland gorilla)).